The chain runs to 206 residues: Holliday junction branch migration complex subunit RuvA (206 aa).

The tract at residues 1-63 (MIASLRGTVI…EDAMKLYGFI (63 aa)) is domain I. Positions 64-142 (DNESREMFSV…AFAAGVVDEA (79 aa)) are domain II. A flexible linker region spans residues 143-153 (GEQISLPNANI). The tract at residues 154 to 206 (ASEVVVEQVSQALVGLGFSEKQSDDAVSFVLAADPSLDTSGALRAALAKLSGK) is domain III.

Belongs to the RuvA family. As to quaternary structure, homotetramer. Forms an RuvA(8)-RuvB(12)-Holliday junction (HJ) complex. HJ DNA is sandwiched between 2 RuvA tetramers; dsDNA enters through RuvA and exits via RuvB. An RuvB hexamer assembles on each DNA strand where it exits the tetramer. Each RuvB hexamer is contacted by two RuvA subunits (via domain III) on 2 adjacent RuvB subunits; this complex drives branch migration. In the full resolvosome a probable DNA-RuvA(4)-RuvB(12)-RuvC(2) complex forms which resolves the HJ.

It is found in the cytoplasm. Functionally, the RuvA-RuvB-RuvC complex processes Holliday junction (HJ) DNA during genetic recombination and DNA repair, while the RuvA-RuvB complex plays an important role in the rescue of blocked DNA replication forks via replication fork reversal (RFR). RuvA specifically binds to HJ cruciform DNA, conferring on it an open structure. The RuvB hexamer acts as an ATP-dependent pump, pulling dsDNA into and through the RuvAB complex. HJ branch migration allows RuvC to scan DNA until it finds its consensus sequence, where it cleaves and resolves the cruciform DNA. This is Holliday junction branch migration complex subunit RuvA from Corynebacterium glutamicum (strain R).